A 126-amino-acid chain; its full sequence is Holo-[acyl-carrier-protein] synthase (126 aa).

Residues D9 and E58 each coordinate Mg(2+).

This sequence belongs to the P-Pant transferase superfamily. AcpS family. It depends on Mg(2+) as a cofactor.

The protein resides in the cytoplasm. It catalyses the reaction apo-[ACP] + CoA = holo-[ACP] + adenosine 3',5'-bisphosphate + H(+). Transfers the 4'-phosphopantetheine moiety from coenzyme A to a Ser of acyl-carrier-protein. The sequence is that of Holo-[acyl-carrier-protein] synthase from Escherichia coli (strain ATCC 8739 / DSM 1576 / NBRC 3972 / NCIMB 8545 / WDCM 00012 / Crooks).